Consider the following 345-residue polypeptide: Aminopeptidase YpdE (345 aa).

A divalent metal cation-binding residues include histidine 62 and aspartate 166. The Proton acceptor role is filled by glutamate 198. A divalent metal cation-binding residues include glutamate 199, aspartate 221, and histidine 308.

It belongs to the peptidase M42 family. Co(2+) is required as a cofactor. The cofactor is Ni(2+). Mn(2+) serves as cofactor. Requires Cu(2+) as cofactor.

Functionally, has a broad aminopeptidase activity on non-blocked peptides by progressively cleaving amino acids off the peptide substrate. Aminopeptidase activity stops at the residue before the first proline in the peptide. Cannot cleave when proline is the first N-terminal residue. This Escherichia coli (strain K12) protein is Aminopeptidase YpdE (ypdE).